Reading from the N-terminus, the 454-residue chain is UPF0210 protein BL1209 (454 aa).

It belongs to the UPF0210 family. As to quaternary structure, homodimer.

This Bifidobacterium longum (strain NCC 2705) protein is UPF0210 protein BL1209.